Here is a 447-residue protein sequence, read N- to C-terminus: Lipid II isoglutaminyl synthase (glutamine-hydrolyzing) subunit MurT (447 aa).

Zn(2+) contacts are provided by cysteine 205, cysteine 208, cysteine 227, and cysteine 230. Residue aspartate 355 is part of the active site.

It belongs to the MurCDEF family. MurT subfamily. As to quaternary structure, forms a heterodimer with GatD.

It catalyses the reaction beta-D-GlcNAc-(1-&gt;4)-Mur2Ac(oyl-L-Ala-gamma-D-Glu-L-Lys-D-Ala-D-Ala)-di-trans,octa-cis-undecaprenyl diphosphate + L-glutamine + ATP + H2O = beta-D-GlcNAc-(1-&gt;4)-Mur2Ac(oyl-L-Ala-D-isoglutaminyl-L-Lys-D-Ala-D-Ala)-di-trans,octa-cis-undecaprenyl diphosphate + L-glutamate + ADP + phosphate + H(+). The catalysed reaction is beta-D-GlcNAc-(1-&gt;4)-Mur2Ac(oyl-L-Ala-gamma-D-Glu-L-Lys-D-Ala-D-Ala)-di-trans,octa-cis-undecaprenyl diphosphate + ATP = beta-D-GlcNAc-(1-&gt;4)-Mur2Ac(oyl-L-Ala-gamma-D-O-P-Glu-L-Lys-D-Ala-D-Ala)-di-trans,octa-cis-undecaprenyl diphosphate + ADP. The enzyme catalyses beta-D-GlcNAc-(1-&gt;4)-Mur2Ac(oyl-L-Ala-gamma-D-O-P-Glu-L-Lys-D-Ala-D-Ala)-di-trans,octa-cis-undecaprenyl diphosphate + NH4(+) = beta-D-GlcNAc-(1-&gt;4)-Mur2Ac(oyl-L-Ala-D-isoglutaminyl-L-Lys-D-Ala-D-Ala)-di-trans,octa-cis-undecaprenyl diphosphate + phosphate + H(+). It participates in cell wall biogenesis; peptidoglycan biosynthesis. Functionally, the lipid II isoglutaminyl synthase complex catalyzes the formation of alpha-D-isoglutamine in the cell wall lipid II stem peptide. The MurT subunit catalyzes the ATP-dependent amidation of D-glutamate residue of lipid II, converting it to an isoglutamine residue. The chain is Lipid II isoglutaminyl synthase (glutamine-hydrolyzing) subunit MurT from Streptococcus pneumoniae (strain ATCC BAA-255 / R6).